Here is a 292-residue protein sequence, read N- to C-terminus: uncharacterized protein (292 aa).

A run of 5 helical transmembrane segments spans residues 57–77 (IISL…LTLI), 101–121 (VYVF…FNFM), 143–163 (LIYA…AVLI), 184–204 (VVIT…NFVL), and 271–291 (IAFL…DRGI).

It belongs to the CbiQ family.

The protein resides in the cell membrane. This is an uncharacterized protein from Methanocaldococcus jannaschii (strain ATCC 43067 / DSM 2661 / JAL-1 / JCM 10045 / NBRC 100440) (Methanococcus jannaschii).